A 581-amino-acid chain; its full sequence is Oligo-1,6-glucosidase IMA5 (581 aa).

The Nucleophile role is filled by Asp-210. The Proton donor role is filled by Glu-272.

It belongs to the glycosyl hydrolase 13 family.

It catalyses the reaction Hydrolysis of (1-&gt;6)-alpha-D-glucosidic linkages in some oligosaccharides produced from starch and glycogen by alpha-amylase, and in isomaltose.. In terms of biological role, alpha-glucosidase with specificity for isomaltose, maltose, and palatinose. The sequence is that of Oligo-1,6-glucosidase IMA5 (IMA5) from Saccharomyces cerevisiae (strain ATCC 204508 / S288c) (Baker's yeast).